The sequence spans 359 residues: MAKLLDIVKPGVVTGEDVQKVFAYAKEHNFAIPAVNCVGSDSVNAVLETAARVKAPVIIQFSNGGAAFYAGKGIKPTSGTRPDVLGAIAGAKQVHTLAKEYGVPVILHTDHAAKKLLPWIDGLLDAGEKHFAETGRPLFSSHMIDLSEESMEENMAICREYLARMDKMGMTLEIEIGITGGEEDGVDNSDVDESRLYTQPSDVLYVYDQLHPVSPNFTVAAAFGNVHGVYKPGNVKLKPSILGESQEFVSKERNLPAKPINFVFHGGSGSSREEIREAIGYGAIKMNIDTDTQWASWNGILNFYKANEAYLQGQLGNPEGPDAPNKKYYDPRVWLRKMEESMSKRLEQSFEDLNCVDVL.

Ser62 is a binding site for D-glyceraldehyde 3-phosphate. Asp110 functions as the Proton donor in the catalytic mechanism. His111, Asp145, Glu175, and His227 together coordinate Zn(2+). Gly228 is a binding site for dihydroxyacetone phosphate. His265 contacts Zn(2+). Dihydroxyacetone phosphate is bound by residues 266–268 (GGS) and 287–290 (NIDT).

Belongs to the class II fructose-bisphosphate aldolase family. In terms of assembly, homodimer. Requires Zn(2+) as cofactor.

It catalyses the reaction beta-D-fructose 1,6-bisphosphate = D-glyceraldehyde 3-phosphate + dihydroxyacetone phosphate. Its pathway is carbohydrate degradation; glycolysis; D-glyceraldehyde 3-phosphate and glycerone phosphate from D-glucose: step 4/4. Catalyzes the aldol condensation of dihydroxyacetone phosphate (DHAP or glycerone-phosphate) with glyceraldehyde 3-phosphate (G3P) to form fructose 1,6-bisphosphate (FBP) in gluconeogenesis and the reverse reaction in glycolysis. This chain is Fructose-bisphosphate aldolase (fba), found in Haemophilus influenzae (strain ATCC 51907 / DSM 11121 / KW20 / Rd).